Reading from the N-terminus, the 285-residue chain is Foldase protein PrsA 2 (285 aa).

The N-terminal stretch at 1–20 (MRGKHIFIITALISILMLAA) is a signal peptide. The N-palmitoyl cysteine moiety is linked to residue Cys-21. Residue Cys-21 is the site of S-diacylglycerol cysteine attachment. A PpiC domain is found at 134-224 (KPEIKASHIL…NGYHIIKLTG (91 aa)).

The protein belongs to the PrsA family.

It localises to the cell membrane. It carries out the reaction [protein]-peptidylproline (omega=180) = [protein]-peptidylproline (omega=0). In terms of biological role, plays a major role in protein secretion by helping the post-translocational extracellular folding of several secreted proteins. Important for the secretion of the protective antigen. The three PsrA proteins in this organism show different but overlapping substrate specificities. In Bacillus anthracis, this protein is Foldase protein PrsA 2 (prsA2).